Consider the following 62-residue polypeptide: Large ribosomal subunit protein bL28 (62 aa).

The interval Met1 to Lys28 is disordered.

The protein belongs to the bacterial ribosomal protein bL28 family.

The chain is Large ribosomal subunit protein bL28 from Bacillus anthracis (strain CDC 684 / NRRL 3495).